A 1294-amino-acid chain; its full sequence is MEDGKPVWAPHPTDGFQMGNIVDIGPDSLTIEPLNQKGKTFLALINQVFPAEEDSKKDVEDNCSLMYLNEATLLHNIKVRYSKDRIYTYVANILIAVNPYFDIPKIYSSEAIKSYQGKSLGTRPPHVFAIADKAFRDMKVLKMSQSIIVSGESGAGKTENTKFVLRYLTESYGTGQDIDDRIVEANPLLEAFGNAKTVRNNNSSRFGKFVEIHFNEKSSVVGGFVSHYLLEKSRICVQGKEERNYHIFYRLCAGASEDIREKLHLSSPDNFRYLNRGCTRYFANKETDKQILQNRKSPEYLKAGSMKDPLLDDHGDFIRMCTAMKKIGLDDEEKLDLFRVVAGVLHLGNIDFEEAGSTSGGCNLKNKSAQSLEYCAELLGLDQDDLRVSLTTRVMLTTAGGTKGTVIKVPLKVEQANNARDALAKTVYSHLFDHVVNRVNQCFPFETSSYFIGVLDIAGFEYFEHNSFEQFCINYCNEKLQQFFNERILKEEQELYQKEGLGVNEVHYVDNQDCIDLIEAKLVGILDILDEENRLPQPSDQHFTSAVHQKHKDHFRLTIPRKSKLAVHRNIRDDEGFIIRHFAGAVCYETTQFVEKNNDALHMSLESLICESRDKFIRELFESSTNNNKDTKQKAGKLSFISVGNKFKTQLNLLLDKLRSTGASFIRCIKPNLKMTSHHFEGAQILSQLQCSGMVSVLDLMQGGYPSRASFHELYNMYKKYMPDKLARLDPRLFCKALFKALGLNENDYKFGLTKVFFRPGKFAEFDQIMKSDPDHLAELVKRVNHWLTCSRWKKVQWCSLSVIKLKNKIKYRAEACIKMQKTIRMWLCKRRHKPRIDGLVKVGTLKKRLDKFNEVVSVLKDGKPEMNKQIKNLEISIDTLMAKIKSTMMTQEQIQKEYDALVKSSEELLSALQKKKQQEEEAERLRRIQEEMEKERKRREEDEKRRRKEEEERRMKLEMEAKRKQEEEERKKREDDEKRIQAEVEAQLARQKEEESQQQAVLEQERRDRELALRIAQSEAELISDEAQADLALRRSLDSYPVSKNDGTRPKMTPEQMAKEMSEFLSRGPAVLATKAAAGTKKYDLSKWKYAELRDTINTSCDIELLAACREEFHRRLKVYHAWKSKNKKRNTETEQRAPKSVTDYDFAPFLNNSPQQNPAAQIPARQREIEMNRQQRFFRIPFIRPADQYKDPQSKKKGWWYAHFDGPWIARQMELHPDKPPILLVAGKDDMEMCELNLEETGLTRKRGAEILPRQFEEIWERCGGIQYLQNAIESRQARPTYATAMLQSLLK.

The Myosin N-terminal SH3-like domain occupies 2–53; that stretch reads EDGKPVWAPHPTDGFQMGNIVDIGPDSLTIEPLNQKGKTFLALINQVFPAEE. Residues 57–771 form the Myosin motor domain; sequence KDVEDNCSLM…KFAEFDQIMK (715 aa). 151–158 lines the ATP pocket; that stretch reads GESGAGKT. Phosphoserine is present on Ser-267. A responsible for slow ATPase activity region spans residues 273 to 317; that stretch reads YLNRGCTRYFANKETDKQILQNRKSPEYLKAGSMKDPLLDDHGDF. Position 405 is a phosphothreonine (Thr-405). Ser-604 bears the Phosphoserine mark. The actin-binding stretch occupies residues 665-672; sequence FIRCIKPN. Residues 782-810 form a required for binding calmodulin region; it reads KRVNHWLTCSRWKKVQWCSLSVIKLKNKI. Residues 814-834 enclose the IQ domain; sequence AEACIKMQKTIRMWLCKRRHK. Positions 835–916 are three-helix bundle; it reads PRIDGLVKVG…EELLSALQKK (82 aa). The interval 917–984 is SAH; sequence KQQEEEAERL…EDDEKRIQAE (68 aa). Residues 934-955 are disordered; it reads EKERKRREEDEKRRRKEEEERR. Phosphoserine is present on Ser-1025. The segment at 1060 to 1285 is interaction with TAX1BP1 and CALCOCO2/NDP52; that stretch reads KEMSEFLSRG…ESRQARPTYA (226 aa). Positions 1116–1118 are interaction with OPTN; the sequence is RRL. Ser-1155 bears the Phosphoserine mark. Residues 1157 to 1285 form an interaction with TOM1 region; that stretch reads QQNPAAQIPA…ESRQARPTYA (129 aa).

This sequence belongs to the TRAFAC class myosin-kinesin ATPase superfamily. Myosin family. Homodimer; dimerization seems to implicate the unfolding of the three-helix bundle region creating an additional calmodulin binding site, and cargo binding. Able to function as a monomer under specific conditions in vitro. Forms a complex with CFTR and DAB2 in the apical membrane of epithelial cells. Component of the DISP/DOCK7-induced septin displacement complex, at least composed of DOCK7, LRCH3 and MYO6. Binding to calmodulin through a unique insert, not found in other myosins, located in the neck region between the motor domain and the IQ domain appears to contribute to the directionality reversal. This interaction occurs only if the C-terminal lobe of calmodulin is occupied by calcium. Interaction with F-actin/ACTN1 occurs only at the apical brush border domain of the proximal tubule cells. Interacts with DAB2. In vitro, the C-terminal globular tail binds a C-terminal region of DAB2. Interacts with CFTR. Interacts with CABP5. Interacts with TOM1. Interacts with OPTN. Interacts with TAX1BP1 and CALCOCO2/NDP52. Interacts with TOM1L2. Interacts with CLIC5; may work together in a complex which also includes RDX and MYO6 to stabilize linkages between the plasma membrane and subjacent actin cytoskeleton at the base of stereocilia. In terms of processing, phosphorylation in the motor domain, induced by EGF, results in translocation of MYO6 from the cell surface to membrane ruffles and affects F-actin dynamics. Phosphorylated in vitro by p21-activated kinase (PAK). As to expression, expressed in most tissues examined including heart, brain, placenta, pancreas, spleen, thymus, prostate, testis, ovary, small intestine and colon. Highest levels in brain, pancreas, testis and small intestine. Also expressed in fetal brain and cochlea. Isoform 1 and isoform 2, containing the small insert, and isoform 4, containing neither insert, are expressed in unpolarized epithelial cells.

Its subcellular location is the golgi apparatus. It is found in the trans-Golgi network membrane. The protein localises to the nucleus. The protein resides in the cytoplasm. It localises to the perinuclear region. Its subcellular location is the membrane. It is found in the clathrin-coated pit. The protein localises to the cytoplasmic vesicle. The protein resides in the clathrin-coated vesicle. It localises to the cell projection. Its subcellular location is the filopodium. It is found in the ruffle membrane. The protein localises to the microvillus. The protein resides in the cytosol. It localises to the autophagosome. Its subcellular location is the endosome. It is found in the clathrin-coated vesicle membrane. Myosins are actin-based motor molecules with ATPase activity. Unconventional myosins serve in intracellular movements. Myosin 6 is a reverse-direction motor protein that moves towards the minus-end of actin filaments. Has slow rate of actin-activated ADP release due to weak ATP binding. Functions in a variety of intracellular processes such as vesicular membrane trafficking and cell migration. Required for the structural integrity of the Golgi apparatus via the p53-dependent pro-survival pathway. Appears to be involved in a very early step of clathrin-mediated endocytosis in polarized epithelial cells. Together with TOM1, mediates delivery of endocytic cargo to autophagosomes thereby promoting autophagosome maturation and driving fusion with lysosomes. Links TOM1 with autophagy receptors, such as TAX1BP1; CALCOCO2/NDP52 and OPTN. May act as a regulator of F-actin dynamics. As part of the DISP complex, may regulate the association of septins with actin and thereby regulate the actin cytoskeleton. May play a role in transporting DAB2 from the plasma membrane to specific cellular targets. May play a role in the extension and network organization of neurites. Required for structural integrity of inner ear hair cells. Required for the correct localization of CLIC5 and RDX at the stereocilium base. Modulates RNA polymerase II-dependent transcription. In Homo sapiens (Human), this protein is Unconventional myosin-VI.